Reading from the N-terminus, the 213-residue chain is DELTA-actitoxin-Aas1a (213 aa).

The signal sequence occupies residues M1–A19. Residues L20–R34 constitute a propeptide that is removed on maturation. Residues A37–G46 form a plays an important role in the hemolytic activity region. The tract at residues G45–N64 is N-terminal region. Phosphocholine is bound by residues S88, V121, S139, P141, Y167, Y171, and Y172. A trp-rich region, which is important for the binding to lipid membrane region spans residues S139–K154. The Cell attachment site, crucial for protein stability motif lies at K178–D180.

The protein belongs to the actinoporin family. Sea anemone subfamily. In terms of assembly, octamer or nonamer in membranes. Monomer in the soluble state.

The protein resides in the secreted. It localises to the nematocyst. The protein localises to the target cell membrane. Functionally, pore-forming protein that forms cation-selective hydrophilic pores of around 1 nm and causes cytolysis. Pore formation is a multi-step process that involves specific recognition of membrane sphingomyelin (but neither cholesterol nor phosphatidylcholine) using aromatic rich region and adjacent phosphocholine (POC) binding site, firm binding to the membrane (mainly driven by hydrophobic interactions) accompanied by the transfer of the N-terminal region to the lipid-water interface and finally pore formation after oligomerization of monomers. This protein shows potent hemolytic activity (EC(50)=8.8 ng/ml) that is specifically inhibited by sphingomyelin. Shows no phospholipase A2 activity, nor antimicrobial activity against the four bacteria tested. Is lethal to crayfish. The sequence is that of DELTA-actitoxin-Aas1a from Anthopleura asiatica (Sea anemone).